Reading from the N-terminus, the 815-residue chain is (-)-kolavenyl diphosphate synthase TPS10, chloroplastic (815 aa).

The transit peptide at 1-50 (MFMSSSSSSHARRPQLSSFSYLHPPLPFPGLSFSSTRDKRVNFDSTRIIS) directs the protein to the chloroplast. Residue Lys-247 coordinates substrate. 2 residues coordinate Mg(2+): Asp-379 and Asp-381. Positions 379-382 (DIDD) match the DXDD motif motif. Residue Lys-465 participates in substrate binding.

Belongs to the terpene synthase family. Tpsc subfamily. Mg(2+) serves as cofactor.

The protein localises to the plastid. Its subcellular location is the chloroplast. The enzyme catalyses (2E,6E,10E)-geranylgeranyl diphosphate = (-)-kolavenyl diphosphate. Inhibited by high concentrations of magnesium. Diterpene synthase that catalyzes the formation of (-)-kolavenyl diphosphate from geranylgeranyl diphosphate (GGPP). This chain is (-)-kolavenyl diphosphate synthase TPS10, chloroplastic, found in Tripterygium wilfordii (Thunder God vine).